The chain runs to 876 residues: Valine--tRNA ligase (876 aa).

The 'HIGH' region motif lies at proline 44 to histidine 54. A 'KMSKS' region motif is present at residues lysine 520–serine 524. Residue lysine 523 participates in ATP binding. Residues leucine 805–alanine 876 are a coiled coil.

Belongs to the class-I aminoacyl-tRNA synthetase family. ValS type 1 subfamily. In terms of assembly, monomer.

It is found in the cytoplasm. The enzyme catalyses tRNA(Val) + L-valine + ATP = L-valyl-tRNA(Val) + AMP + diphosphate. In terms of biological role, catalyzes the attachment of valine to tRNA(Val). As ValRS can inadvertently accommodate and process structurally similar amino acids such as threonine, to avoid such errors, it has a 'posttransfer' editing activity that hydrolyzes mischarged Thr-tRNA(Val) in a tRNA-dependent manner. The polypeptide is Valine--tRNA ligase (Staphylococcus aureus (strain MRSA252)).